A 97-amino-acid chain; its full sequence is Large ribosomal subunit protein bL28 (97 aa).

This sequence belongs to the bacterial ribosomal protein bL28 family.

This is Large ribosomal subunit protein bL28 from Rickettsia rickettsii (strain Iowa).